Reading from the N-terminus, the 87-residue chain is U3-theraphotoxin-Hhn1g (87 aa).

A signal peptide spans methionine 1–alanine 24. Positions serine 25–arginine 52 are excised as a propeptide. 3 cysteine pairs are disulfide-bonded: cysteine 54–cysteine 67, cysteine 61–cysteine 72, and cysteine 66–cysteine 79.

It belongs to the neurotoxin 10 (Hwtx-1) family. 51 (Hntx-8) subfamily. Hntx-8 sub-subfamily. Expressed by the venom gland.

The protein resides in the secreted. In terms of biological role, ion channel inhibitor. This Cyriopagopus hainanus (Chinese bird spider) protein is U3-theraphotoxin-Hhn1g.